The following is a 1516-amino-acid chain: Mediator of RNA polymerase II transcription subunit 14 (1516 aa).

Disordered stretches follow at residues 22–98 (LSSQ…EVPA) and 1434–1516 (MHRQ…YPPQ). The segment covering 34 to 47 (SPAAPISPAPSGSA) has biased composition (low complexity). Basic and acidic residues predominate over residues 72-83 (SEVDVKSIHSSD). Low complexity predominate over residues 1463–1473 (SHQQHMMNPGS). Positions 1474–1483 (VGPGSVGGPG) are enriched in gly residues. Low complexity predominate over residues 1502–1516 (QSYHHPLHHQQYPPQ).

This sequence belongs to the Mediator complex subunit 14 family. Component of the Mediator complex.

The protein localises to the nucleus. Functionally, component of the Mediator complex, a coactivator involved in the regulated transcription of nearly all RNA polymerase II-dependent genes. Mediator functions as a bridge to convey information from gene-specific regulatory proteins to the basal RNA polymerase II transcription machinery. Mediator is recruited to promoters by direct interactions with regulatory proteins and serves as a scaffold for the assembly of a functional preinitiation complex with RNA polymerase II and the general transcription factors. Required for transcription in the embryo and for phosphorylation of the RNA polymerase II C-terminal domain repeat. This chain is Mediator of RNA polymerase II transcription subunit 14 (rgr-1), found in Caenorhabditis elegans.